A 150-amino-acid chain; its full sequence is Ventricular natriuretic peptide (150 aa).

A signal peptide spans 1 to 21; that stretch reads MAKSGIYLGCFILILIQNMVA. Residues 52-75 form a disordered region; it reads EEPEVYPESEDMKMDAEEEDAGIS. Cysteine 120 and cysteine 136 form a disulfide bridge.

It belongs to the natriuretic peptide family. In terms of tissue distribution, heart ventricle, and to a lower extent in heart atrium.

The protein resides in the secreted. Its function is as follows. Exhibits natriuretic and vasodepressor activity. The protein is Ventricular natriuretic peptide (vnp) of Anguilla japonica (Japanese eel).